The sequence spans 416 residues: Tiggy-winkle hedgehog protein (416 aa).

Positions 1-26 (MDVRLHLKQFALLCFISLLLTPCGLA) are cleaved as a signal peptide. A lipid anchor (N-palmitoyl cysteine) is attached at Cys-27. Positions 92, 93, 98, 128, 129, 132, and 134 each coordinate Ca(2+). Zn(2+) contacts are provided by His-143, Asp-150, and His-185. Gly-200 carries the Cholesterol glycine ester lipid modification.

The protein belongs to the hedgehog family. Multimer. In terms of assembly, interacts with HHATL/GUP1 which negatively regulates HHAT-mediated palmitoylation of the TWHH N-terminus. Interacts with BOC and CDON. Interacts with HHIP. Interacts with DISP1 via its cholesterol anchor. Interacts with SCUBE2. Post-translationally, the C-terminal domain displays an autoproteolysis activity and a cholesterol transferase activity. Both activities result in the cleavage of the full-length protein into two parts (N-product and C-product) followed by the covalent attachment of a cholesterol moiety to the C-terminal of the newly generated N-product. Cholesterylation is required for the tiggy-winkle hedgehog protein N-product targeting to lipid rafts and multimerization. N-product is the active species in both local and long-range signaling, whereas the C-product is degraded in the endoplasmic reticulum. In terms of processing, N-palmitoylation by HHAT of N-product is required for tiggy-winkle hedgehog protein N-product multimerization and full activity. It is a prerequisite for the membrane-proximal positioning and the subsequent shedding of this N-terminal peptide. The lipidated N- and C-terminal peptides of N-product can be cleaved (shedding). The N-terminal palmitoylated peptide is cleaved at the Cardin-Weintraub (CW) motif site. The cleavage reduced the interactions with heparan sulfate. The cleavage is enhanced by SCUBE2. Expressed in the ventral midline of the neural tube and brain. In the developing brain, expression occurs in domains that include a discrete region in the floor of the diencephalon. Not detected in the notochord or developing fin bud.

It localises to the cell membrane. The protein localises to the endoplasmic reticulum membrane. Its subcellular location is the golgi apparatus membrane. Its function is as follows. The C-terminal part of the tiggy-winkle hedgehog protein precursor displays an autoproteolysis and a cholesterol transferase activity. Both activities result in the cleavage of the full-length protein into two parts (N-product and C-product) followed by the covalent attachment of a cholesterol moiety to the C-terminal of the newly generated N-product. Both activities occur in the endoplasmic reticulum. Once cleaved, the C-product is degraded in the endoplasmic reticulum. Functionally, the dually lipidated tiggy-winkle hedgehog protein N-product is a morphogen which is essential for a variety of patterning events during development. Involved in dorso-ventral patterning of the brain and in early patterning of the developing eyes. Binds to the patched (PTCH1) receptor, which functions in association with smoothened (SMO), to activate the transcription of target genes. This Danio rerio (Zebrafish) protein is Tiggy-winkle hedgehog protein (shhb).